A 578-amino-acid polypeptide reads, in one-letter code: SWR1 complex bromodomain subunit bdf1 (578 aa).

Residues Met1–Ile18 show a composition bias toward basic and acidic residues. 3 disordered regions span residues Met1–Gln89, Asp192–Asn254, and Ala504–Ala578. Over residues Gly22–Asp36 the composition is skewed to polar residues. 2 stretches are compositionally biased toward basic and acidic residues: residues Gly37–Ser52 and Leu60–Val77. The 107-residue stretch at Gly84–Leu190 folds into the Bromo 1 domain. Residues Asn219–Val242 are compositionally biased toward low complexity. A phosphoserine mark is found at Ser221, Ser223, and Ser224. A Phosphothreonine modification is found at Thr225. A phosphoserine mark is found at Ser226 and Ser239. One can recognise a Bromo 2 domain in the interval Arg251 to Arg360. Positions Arg430–Ala510 constitute an NET domain. Ser511 is subject to Phosphoserine. Residues Val526–Arg537 are compositionally biased toward basic and acidic residues. Polar residues predominate over residues Thr550–Val563. Over residues Ser566–Ala578 the composition is skewed to acidic residues.

The protein belongs to the BET family. As to quaternary structure, component of the SWR1 chromatin-remodeling complex.

It localises to the nucleus. Its function is as follows. Component of the SWR1 complex which mediates the ATP-dependent exchange of histone H2A for the H2A variant HZT1 leading to transcriptional regulation of selected genes by chromatin remodeling. This Schizosaccharomyces pombe (strain 972 / ATCC 24843) (Fission yeast) protein is SWR1 complex bromodomain subunit bdf1 (bdf1).